Reading from the N-terminus, the 812-residue chain is Valine--tRNA ligase (812 aa).

The 'HIGH' region signature appears at 46 to 56 (PTVSGQLHIGH). Positions 536–540 (KMSKS) match the 'KMSKS' region motif. Lys539 contributes to the ATP binding site.

Belongs to the class-I aminoacyl-tRNA synthetase family. ValS type 2 subfamily. Monomer.

It is found in the cytoplasm. The catalysed reaction is tRNA(Val) + L-valine + ATP = L-valyl-tRNA(Val) + AMP + diphosphate. In terms of biological role, catalyzes the attachment of valine to tRNA(Val). As ValRS can inadvertently accommodate and process structurally similar amino acids such as threonine, to avoid such errors, it has a 'posttransfer' editing activity that hydrolyzes mischarged Thr-tRNA(Val) in a tRNA-dependent manner. The polypeptide is Valine--tRNA ligase (Rickettsia akari (strain Hartford)).